The primary structure comprises 42 residues: Serine protease inhibitor 8 (42 aa).

This sequence belongs to the protease inhibitor I3 (leguminous Kunitz-type inhibitor) family. In terms of tissue distribution, cortex of potato tuber.

Functionally, potent inhibitor of animal pancreatic trypsin (serine protease). This chain is Serine protease inhibitor 8, found in Solanum tuberosum (Potato).